Reading from the N-terminus, the 621-residue chain is Chaperone protein DnaK (621 aa).

Thr175 carries the post-translational modification Phosphothreonine; by autocatalysis. Basic and acidic residues predominate over residues 499–516 (EAHEADDKKRKEDAETRN). 2 disordered regions span residues 499–520 (EAHE…NAEN) and 583–621 (AQQG…KDNK). Positions 583-602 (AQQGAEGAAGAADSGSANNG) are enriched in low complexity. The span at 603–621 (GDDDVVDAEVVDDDDKDNK) shows a compositional bias: acidic residues.

This sequence belongs to the heat shock protein 70 family.

Acts as a chaperone. This is Chaperone protein DnaK from Bifidobacterium animalis subsp. lactis (strain AD011).